We begin with the raw amino-acid sequence, 207 residues long: Transcription factor DYT1 (207 aa).

Positions methionine 1 to arginine 38 are disordered. Residues asparagine 28–leucine 77 enclose the bHLH domain.

Homodimer. As to expression, mostly expressed in anthers, and, to a lower extent, in young inflorescences undergoing meiosis and siliques.

The protein localises to the nucleus. Its function is as follows. Transcription factor. Involved in the control of tapetum development. Required for male fertility and pollen differentiation, especially during callose deposition. This is Transcription factor DYT1 from Arabidopsis thaliana (Mouse-ear cress).